Here is a 493-residue protein sequence, read N- to C-terminus: Chitinase 1 (493 aa).

The N-terminal stretch at methionine 1–alanine 20 is a signal peptide. A GH18 domain is found at valine 27 to alanine 318. The Proton donor role is filled by glutamate 164.

This sequence belongs to the glycosyl hydrolase 18 family. Chitinase class III subfamily.

The catalysed reaction is Random endo-hydrolysis of N-acetyl-beta-D-glucosaminide (1-&gt;4)-beta-linkages in chitin and chitodextrins.. The chain is Chitinase 1 (CHI1) from Rhizopus niveus.